Here is a 520-residue protein sequence, read N- to C-terminus: GMP synthase [glutamine-hydrolyzing] (520 aa).

Residues 9-202 (SVLIVDFGSQ…IHNIAGIKGD (194 aa)) enclose the Glutamine amidotransferase type-1 domain. Cys86 acts as the Nucleophile in catalysis. Catalysis depends on residues His176 and Glu178. A GMPS ATP-PPase domain is found at 203 to 395 (WSMSAYRQKA…LGLPDSFIGR (193 aa)). An ATP-binding site is contributed by 230–236 (SGGVDSS).

As to quaternary structure, homodimer.

It catalyses the reaction XMP + L-glutamine + ATP + H2O = GMP + L-glutamate + AMP + diphosphate + 2 H(+). It functions in the pathway purine metabolism; GMP biosynthesis; GMP from XMP (L-Gln route): step 1/1. Its function is as follows. Catalyzes the synthesis of GMP from XMP. This chain is GMP synthase [glutamine-hydrolyzing], found in Rhizobium johnstonii (strain DSM 114642 / LMG 32736 / 3841) (Rhizobium leguminosarum bv. viciae).